The chain runs to 272 residues: Cholesterol 25-hydroxylase (272 aa).

Asn5 is a glycosylation site (N-linked (GlcNAc...) asparagine). The next 3 membrane-spanning stretches (helical) occupy residues 38-58 (FFPV…FVVL), 84-104 (LLPC…PVTL), and 121-141 (LLLL…EFFV). The Fatty acid hydroxylase domain maps to 129–263 (LFCLLLFDME…FTHWDKILGT (135 aa)). Residues 142–146 (WHLLH) carry the Histidine box-1 motif. The Histidine box-2 motif lies at 157–161 (HKVHH). 2 N-linked (GlcNAc...) asparagine glycosylation sites follow: Asn163 and Asn189. The Histidine box-3 motif lies at 238-244 (HHDLHHS).

This sequence belongs to the sterol desaturase family. Requires Fe cation as cofactor. Post-translationally, N-glycosylated.

It is found in the endoplasmic reticulum membrane. It carries out the reaction cholesterol + AH2 + O2 = 25-hydroxycholesterol + A + H2O. The catalysed reaction is cholesterol + NADPH + O2 + H(+) = 25-hydroxycholesterol + NADP(+) + H2O. Its function is as follows. Catalyzes the formation of 25-hydroxycholesterol from cholesterol, leading to repress cholesterol biosynthetic enzymes. Plays a key role in cell positioning and movement in lymphoid tissues: 25-hydroxycholesterol is an intermediate in biosynthesis of 7-alpha,25-dihydroxycholesterol (7-alpha,25-OHC), an oxysterol that acts as a ligand for the G protein-coupled receptor GPR183/EBI2, a chemotactic receptor for a number of lymphoid cells. May play an important role in regulating lipid metabolism by synthesizing a corepressor that blocks sterol regulatory element binding protein (SREBP) processing. As an interferon-stimulated gene, has broad antiviral activities against a wide range of enveloped viruses, such as vesicular stomatitis virus (VSV) and SARS coronavirus-2 (SARS-CoV-2). Its product, 25-hydroxycholesterol, activates the ER-localized enzyme ACAT to induce internalization of accessible cholesterol on the plasma membrane and restricts SARS-CoV-2 S protein-mediated fusion which inhibits virus replication. In testis, production of 25-hydroxycholesterol by macrophages plays a role in Leydig cell differentiation. Required to restrain inflammation in macrophages: production of 25-hydroxycholesterol protects macrophages from cholesterol overload, thereby preventing mitochondrial DNA release and subsequent activation of the AIM2 inflammasome. The chain is Cholesterol 25-hydroxylase from Homo sapiens (Human).